A 76-amino-acid polypeptide reads, in one-letter code: UPF0270 protein PSPA7_1664 (76 aa).

The protein belongs to the UPF0270 family.

This is UPF0270 protein PSPA7_1664 from Pseudomonas paraeruginosa (strain DSM 24068 / PA7) (Pseudomonas aeruginosa (strain PA7)).